Consider the following 526-residue polypeptide: Cytochrome P450 monooxygenase 253 (526 aa).

Transmembrane regions (helical) follow at residues isoleucine 13 to isoleucine 33, phenylalanine 115 to lysine 135, and isoleucine 306 to leucine 326. A heme-binding site is contributed by cysteine 451.

The protein belongs to the cytochrome P450 family. Heme serves as cofactor.

The protein localises to the membrane. Its pathway is secondary metabolite biosynthesis. Its function is as follows. Cytochrome P450 monooxygenase that is able to use delta(6)-protoilludene as a substrate to produce delta(6)-protoilludene-8-ol. This is Cytochrome P450 monooxygenase 253 from Postia placenta (strain ATCC 44394 / Madison 698-R) (Brown rot fungus).